The primary structure comprises 332 residues: Heterogeneous nuclear ribonucleoprotein A/B (332 aa).

The segment at 1–66 (MSEAGEEQPM…DQINASKNEE (66 aa)) is disordered. A compositionally biased stretch (low complexity) spans 29-49 (GRGWTGAAAGAGGATAAPPSG). RRM domains lie at 69–154 (GKMF…PVKK) and 153–233 (KKIF…QPKE). Residue serine 81 is modified to Phosphoserine. Glycyl lysine isopeptide (Lys-Gly) (interchain with G-Cter in SUMO2) cross-links involve residues lysine 130 and lysine 203. An N6-acetyllysine modification is found at lysine 215. The segment at 235–268 (YQQQQYGSGGRGNRNRGNRGSGGGGGGGGQSQSW) is disordered. Serine 242 bears the Phosphoserine mark. Position 245 is a dimethylated arginine; alternate (arginine 245). Residue arginine 245 is modified to Omega-N-methylarginine; alternate. Omega-N-methylarginine is present on residues arginine 250, glycine 251, arginine 253, and glycine 254. Residues 253 to 264 (RGSGGGGGGGGQ) are compositionally biased toward gly residues. A phosphoserine mark is found at serine 255 and glycine 256. An N6-acetyllysine mark is found at glycine 271, tyrosine 272, and lysine 318. A disordered region spans residues 311–332 (QGSTNYGKSQRRGGHQNNYKPY). Dimethylated arginine; alternate is present on arginine 322. Arginine 322 is subject to Omega-N-methylarginine; alternate. Arginine 322 is subject to Asymmetric dimethylarginine; alternate.

As to quaternary structure, identified in a IGF2BP1-dependent mRNP granule complex containing untranslated mRNAs. Interacts with APOBEC1. In terms of processing, dimethylation at Arg-322 is probably asymmetric. In terms of tissue distribution, ubiquitous.

The protein localises to the nucleus. The protein resides in the cytoplasm. Binds single-stranded RNA. Has a high affinity for G-rich and U-rich regions of hnRNA. Also binds to APOB mRNA transcripts around the RNA editing site. This chain is Heterogeneous nuclear ribonucleoprotein A/B (HNRNPAB), found in Homo sapiens (Human).